The primary structure comprises 1019 residues: Katanin p80 WD40 repeat-containing subunit B1 homolog KTN80.1 (1019 aa).

WD repeat units lie at residues 13-53, 56-95, 98-137, 140-181, 183-221, 224-264, and 266-303; these read AHSG…SPMS, GHTSPVDSVAFNSEEVLVLAGASSGVIKLWDLEESKMVRA, GHRSNCSAVEFHPFGEFLASGSSDTNLRVWDTRKKGCIQT, GHTR…HEFK, HEGPIRSLDFHPLEFLLATGSADRTVKFWDLETFELIGT, PEAT…DGVD, and GWSTLGDFCINEGKFIGCSYYRNSVGIWVSDISELEPY. The DWD box signature appears at 114 to 130; the sequence is FLASGSSDTNLRVWDTR. Disordered regions lie at residues 388–424, 455–474, 517–581, and 607–652; these read FGPAGDKYSSTSRDSDSGEESSYSERESIPFSRTKSG, KSGLAVEEEPQTQNAFLSEQ, IHRS…GSRE, and RGEK…RARS. Polar residues predominate over residues 465-474; it reads QTQNAFLSEQ. Residues 553-572 show a composition bias toward basic and acidic residues; the sequence is IPSKTERVLSREKPGDEQKN. Positions 614-628 are enriched in polar residues; that stretch reads TEGASTTIEQNNNAV.

Belongs to the WD repeat KATNB1 family. Component of KTN80-KTN1 complexes composed of a hexamer of KTN1-KTN80 heterodimers that sense microtubule (MT) geometry to confer precise MT severing. Interacts directly with AAA1/KTN1 and KTN80.3, and weakly with KTN80.4. In terms of tissue distribution, expressed at low levels in siliques, flowers, leaves, stems and roots.

The protein localises to the cytoplasm. Its subcellular location is the cytoskeleton. Its function is as follows. May participate in a complex which severs microtubules in an ATP-dependent manner. Microtubule severing may promote rapid reorganization of cellular microtubule arrays. Confers precision to microtubule (MT) severing by specific targeting of KTN1 to MT cleavage sites such as crossover or branching nucleation sites. Together with other KTN80s, regulates cell elongation by modulating MT organization. The sequence is that of Katanin p80 WD40 repeat-containing subunit B1 homolog KTN80.1 from Arabidopsis thaliana (Mouse-ear cress).